The following is a 500-amino-acid chain: L-arabinose isomerase (500 aa).

The Mn(2+) site is built by Glu306, Glu333, His349, and His448.

This sequence belongs to the arabinose isomerase family. It depends on Mn(2+) as a cofactor.

It carries out the reaction beta-L-arabinopyranose = L-ribulose. It participates in carbohydrate degradation; L-arabinose degradation via L-ribulose; D-xylulose 5-phosphate from L-arabinose (bacterial route): step 1/3. Functionally, catalyzes the conversion of L-arabinose to L-ribulose. This Shewanella sp. (strain ANA-3) protein is L-arabinose isomerase.